Consider the following 161-residue polypeptide: Gamma-glutamylaminecyclotransferase A (161 aa).

Position 26-29 (26-29 (YGTL)) interacts with substrate. E101 acts as the Proton acceptor in catalysis.

It belongs to the gamma-glutamylcyclotransferase family.

It carries out the reaction epsilon-(gamma-L-glutamyl)-L-lysine = 5-oxo-L-proline + L-lysine. May contribute to degradation of proteins cross-linked by transglutaminases by degrading the cross-link between a lysine and a glutamic acid residue. Catalyzes the formation of 5-oxo-L-proline from L-gamma-glutamyl-L-epsilon-lysine. The chain is Gamma-glutamylaminecyclotransferase A (ggact.1) from Danio rerio (Zebrafish).